Reading from the N-terminus, the 502-residue chain is Myocilin (502 aa).

The signal sequence occupies residues 1–31 (MPSCAYCCSCGPKMPALQLLFLACLVWGMGA). Positions 82–183 (ADLESTKARV…QEVARLRRGQ (102 aa)) form a coiled coil. A disordered region spans residues 166 to 198 (ARRLEGSSQEVARLRRGQCPSTHHPSQDMLPGS). Asn229 is a glycosylation site (N-linked (GlcNAc...) asparagine). The Olfactomedin-like domain occupies 242–501 (GCGVLMWVGE…MVTYDIKLSE (260 aa)). Residues Cys243 and Cys431 are joined by a disulfide bond. Positions 378, 426, 427, 475, and 476 each coordinate Ca(2+).

Homodimer (via N-terminus). Can also form higher oligomers. Interacts with OLFM3, FN1, NRCAM, GLDN and NFASC. Interacts (via N-terminus) with MYL2. Interacts with SFRP1, FRZB, FZD7, FZD10, FZD1 and WIF1; regulates Wnt signaling. Interacts with SNTA1; regulates muscle hypertrophy. Interacts with ERBB2 and ERBB3; activates ERBB2-ERBB3 signaling pathway. Interacts with SNCG; affects its secretion and its aggregation. In terms of processing, palmitoylated. Undergoes a calcium-dependent proteolytic cleavage at Gln-225 by CAPN2 in the endoplasmic reticulum. The result is the production of two fragments, one of 35 kDa containing the C-terminal olfactomedin-like domain, and another of 20 kDa containing the N-terminal leucine zipper-like domain. Post-translationally, glycosylated. Highly expressed in skeletal muscle and retina. Also detected at lower levels in thyroid gland but not in other endocrine glands such as the adrenal or pituitary glands.

The protein resides in the secreted. The protein localises to the golgi apparatus. It is found in the cytoplasmic vesicle. It localises to the extracellular space. Its subcellular location is the extracellular matrix. The protein resides in the extracellular exosome. The protein localises to the mitochondrion. It is found in the mitochondrion intermembrane space. It localises to the mitochondrion inner membrane. Its subcellular location is the mitochondrion outer membrane. The protein resides in the rough endoplasmic reticulum. The protein localises to the cell projection. It is found in the cilium. It localises to the endoplasmic reticulum. Functionally, secreted glycoprotein regulating the activation of different signaling pathways in adjacent cells to control different processes including cell adhesion, cell-matrix adhesion, cytoskeleton organization and cell migration. Promotes substrate adhesion, spreading and formation of focal contacts. Negatively regulates cell-matrix adhesion and stress fiber assembly through Rho protein signal transduction. Modulates the organization of actin cytoskeleton by stimulating the formation of stress fibers through interactions with components of Wnt signaling pathways. Promotes cell migration through activation of PTK2 and the downstream phosphatidylinositol 3-kinase signaling. Plays a role in bone formation and promotes osteoblast differentiation in a dose-dependent manner through mitogen-activated protein kinase signaling. Mediates myelination in the peripheral nervous system through ERBB2/ERBB3 signaling. Plays a role as a regulator of muscle hypertrophy through the components of dystrophin-associated protein complex. Involved in positive regulation of mitochondrial depolarization. Plays a role in neurite outgrowth. May participate in the obstruction of fluid outflow in the trabecular meshwork. This Rattus norvegicus (Rat) protein is Myocilin (Myoc).